The sequence spans 698 residues: Probable metal-nicotianamine transporter YSL17 (698 aa).

Positions 1–36 (MAEEARGGQRVVVDDDREDASSVASSTERAFEGEPL) are disordered. 14 helical membrane-spanning segments follow: residues 43–63 (VTAR…VVAM), 67–87 (LTSG…FFLA), 114–134 (IAVV…YILG), 157–177 (IGRV…IIVP), 216–236 (VVTL…QWFF), 277–297 (MITA…WPYI), 322–342 (VFVG…SALV), 395–415 (WVAV…VPLL), 424–444 (VAAA…GVGV), 463–483 (SWVG…GIIV), 511–531 (VGQV…FWVF), 567–587 (LPDH…ALSA), 607–627 (IGVA…AVGC), and 644–664 (LLLP…SLAS).

The protein belongs to the YSL (TC 2.A.67.2) family. As to expression, expressed at low levels in roots.

The protein localises to the membrane. May be involved in the transport of nicotianamine-chelated metals. This Oryza sativa subsp. japonica (Rice) protein is Probable metal-nicotianamine transporter YSL17 (YSL17).